The chain runs to 436 residues: MTLNTDNNQILFERAKRVIPGGVNSPVRAFKAVGGTPRFVKRAQGAYFWDANNQRYTDFIGSWGPMILGHGHPAVVEAVQAAVLEGFSYGAPTEREVELAEEILRLVPSMDMVRLVSSGTEAAMSTIRLARGATGRSKLIKFEGCYHGHADALLVKAGSGLATFGNPTSAGVPPEVVQHTVVLEYNNIEQLEEAFAMQGSEIACLMMEPICGNMNFVRASVPFVKRCRELCTQYGALLVFDEVMTGFRVALGGAQSVYAKEIPGFEPDMTVMGKVIGGGMPLAAFGAKRAVMEHLAPLGTVYQAGTLSGNPVATACGLATLREISKPGFYESLARTTRSLTDGLKAAATAEGLAFSADSEGGMFGFFLLDTLPQNYVQVMKSDSARFNQLFHGLLDRGVYIAPALYEAGFVSAAHTAEDIAATVAAARAVFKIISK.

Lys274 is modified (N6-(pyridoxal phosphate)lysine).

Belongs to the class-III pyridoxal-phosphate-dependent aminotransferase family. HemL subfamily. Homodimer. Pyridoxal 5'-phosphate serves as cofactor.

It localises to the cytoplasm. The enzyme catalyses (S)-4-amino-5-oxopentanoate = 5-aminolevulinate. The protein operates within porphyrin-containing compound metabolism; protoporphyrin-IX biosynthesis; 5-aminolevulinate from L-glutamyl-tRNA(Glu): step 2/2. This Albidiferax ferrireducens (strain ATCC BAA-621 / DSM 15236 / T118) (Rhodoferax ferrireducens) protein is Glutamate-1-semialdehyde 2,1-aminomutase.